The sequence spans 747 residues: Oxysterol-binding protein-related protein 11 (747 aa).

M1 is modified (N-acetylmethionine). The disordered stretch occupies residues 1–50 (MQGGEPVSTMKVSESEGKLEGQATAVTPNKNSSCGGGISSSSSSRGGSAK). Position 15 is a phosphoserine (S15). T27 is modified (phosphothreonine). The 98-residue stretch at 58–155 (MENVYGYLMK…WVSRLQICTQ (98 aa)) folds into the PH domain. At Y62 the chain carries Phosphotyrosine. Residues 158-188 (TEAIGKNNPPLKSRSFSLASSSNSPISQRRP) are disordered. The span at 170 to 184 (SRSFSLASSSNSPIS) shows a compositional bias: low complexity. Residues S172, S174, S177, S181, S184, and S189 each carry the phosphoserine modification. Over residues 689–713 (EIDKATEHKHTLEERQRTEERHRTE) the composition is skewed to basic and acidic residues. Residues 689 to 714 (EIDKATEHKHTLEERQRTEERHRTET) are disordered.

The protein belongs to the OSBP family. Heterodimer with OSBPL9. As to expression, present at highest levels in ovary, testis, kidney, liver, stomach, brain, and adipose tissue. Strong expression (at protein level) in epithelial cells of kidney tubules, testicular tubules, caecum, and skin. Present at low levels in subcutaneous and visceral adipose tissue (at protein level).

It localises to the late endosome membrane. It is found in the golgi apparatus. The protein localises to the trans-Golgi network membrane. It carries out the reaction a 1,2-diacyl-sn-glycero-3-phospho-(1D-myo-inositol 4-phosphate)(out) + a 1,2-diacyl-sn-glycero-3-phospho-L-serine(in) = a 1,2-diacyl-sn-glycero-3-phospho-(1D-myo-inositol 4-phosphate)(in) + a 1,2-diacyl-sn-glycero-3-phospho-L-serine(out). Plays a role in regulating ADIPOQ and FABP4 levels in differentiating adipocytes and is also involved in regulation of adipocyte triglyceride storage. Weakly binds 25-hydroxycholesterol. Interacts with OSBPL9 to function as lipid transfer proteins. Together they form a heterodimer that localizes at the ER-trans-Golgi membrane contact sites, and exchanges phosphatidylserine (1,2-diacyl-sn-glycero-3-phospho-L-serine, PS) for phosphatidylinositol-4-phosphate (1,2-diacyl-sn-glycero-3-phospho-(1D-myo-inositol 4-phosphate), PI(4)P) between the two organelles, a step that is critical for sphingomyelin synthesis in the Golgi complex. This chain is Oxysterol-binding protein-related protein 11 (OSBPL11), found in Homo sapiens (Human).